The sequence spans 214 residues: External core antigen (214 aa).

The signal sequence occupies residues 1 to 19 (MQLFHLCLIISCTCPTVQA). An HBEAG region spans residues 25-27 (GWL). The tract at residues 165–214 (NAPILSTLPETTVVRRRDRGRSPRRRTPSPRRRRSQSPRRRRSQSRESQC) is disordered. Residues 178-207 (VRRRDRGRSPRRRTPSPRRRRSQSPRRRRS) are compositionally biased toward basic residues. The stretch at 186 to 192 (SPRRRTP) is one 1; half-length repeat. The interval 186 to 208 (SPRRRTPSPRRRRSQSPRRRRSQ) is 3 X 8 AA repeats of S-P-R-R-R-R-S-Q. Positions 186–214 (SPRRRTPSPRRRRSQSPRRRRSQSRESQC) are excised as a propeptide. 2 repeat units span residues 193–200 (SPRRRRSQ) and 201–208 (SPRRRRSQ).

It belongs to the orthohepadnavirus precore antigen family. Homodimerizes. Post-translationally, phosphorylated. In terms of processing, cleaved by host furin.

Its subcellular location is the secreted. It localises to the host nucleus. Functionally, may regulate immune response to the intracellular capsid in acting as a T-cell tolerogen, by having an immunoregulatory effect which prevents destruction of infected cells by cytotoxic T-cells. This immune regulation may predispose to chronicity during perinatal infections and prevent severe liver injury during adult infections. The chain is External core antigen from Homo sapiens (Human).